The sequence spans 631 residues: Glycosyltransferase-like protein LARGE (631 aa).

The Cytoplasmic portion of the chain corresponds to 1 to 6; that stretch reads MQSNYS. Residues 7-27 traverse the membrane as a helical; Signal-anchor for type II membrane protein segment; the sequence is ISYFLLILFTGTSSYFTIWNF. The Lumenal segment spans residues 28–631; the sequence is VDHTRVGAFP…TASRLGIKLR (604 aa). 11 N-linked (GlcNAc...) asparagine glycosylation sites follow: Asn-95, Asn-105, Asn-167, Asn-177, Asn-287, Asn-400, Asn-485, Asn-502, Asn-521, Asn-529, and Asn-593.

This sequence belongs to the glycosyltransferase 8 family.

The protein resides in the golgi apparatus membrane. Probable glycosyltransferase. The protein is Glycosyltransferase-like protein LARGE (lge-1) of Caenorhabditis elegans.